The following is a 470-amino-acid chain: Probable tocopherol cyclase, chloroplastic (470 aa).

Residues 1 to 61 (MDLAAAAVAV…APTPRDRALR (61 aa)) constitute a chloroplast transit peptide. A disordered region spans residues 14–48 (RPAPPPRRCAPRRHRRALAPRAASSSPSPSTAVAA). The span at 22-31 (CAPRRHRRAL) shows a compositional bias: basic residues. Residues 32–48 (APRAASSSPSPSTAVAA) are compositionally biased toward low complexity.

In terms of tissue distribution, expressed in the roots, stems, leaves and spikelets.

The protein resides in the plastid. The protein localises to the chloroplast. It localises to the plastoglobule. The protein operates within cofactor biosynthesis; tocopherol biosynthesis. In terms of biological role, involved in the synthesis of both tocopherols and tocotrienols (vitamin E), which presumably protect photosynthetic complexes from oxidative stress. Catalyzes the conversion of 2-methyl-6-phytyl-1,4-hydroquinone and 2,3-dimethyl-5-phytyl-1,4-hydroquinone (DMPQ) to delta- and gamma-tocopherol respectively. Also converts 2,3-dimethyl-5-geranylgeranyl-1,4-hydroquinone (DMGQ) to gamma-tocotrienol. The sequence is that of Probable tocopherol cyclase, chloroplastic (VTE1) from Oryza sativa subsp. japonica (Rice).